Reading from the N-terminus, the 739-residue chain is uncharacterized protein (739 aa).

The next 8 membrane-spanning stretches (helical) occupy residues 53 to 73, 90 to 110, 114 to 134, 178 to 198, 421 to 441, 457 to 477, 491 to 511, and 532 to 552; these read LALGIALWMELGSPQWAALTV, WHLFGMVVGVISGITLVAAIP, LMFILLLAVGIGTFCMIGTFM, TYILLGIVLEASISGLFQLGL, LIWICTAWPSGLTFIMFVCIV, AFLRGACCAVVAAGILNLALM, GLAMMIGGLAFAYPPLTLPAV, and IVYFNTALPLVLGLLYASWMY.

The protein belongs to the aromatic acid exporter ArAE (TC 2.A.85) family.

It localises to the cell membrane. This is an uncharacterized protein from Gluconobacter oxydans (strain 621H) (Gluconobacter suboxydans).